The following is a 98-amino-acid chain: Cell cycle protein GpsB (98 aa).

Residues 34–71 (LDLIIKDYEAFQQEIDELRQENARLKRQVEELQKRPAM) adopt a coiled-coil conformation.

Belongs to the GpsB family. As to quaternary structure, forms polymers through the coiled coil domains. Interacts with PBP1, MreC and EzrA.

It localises to the cytoplasm. Divisome component that associates with the complex late in its assembly, after the Z-ring is formed, and is dependent on DivIC and PBP2B for its recruitment to the divisome. Together with EzrA, is a key component of the system that regulates PBP1 localization during cell cycle progression. Its main role could be the removal of PBP1 from the cell pole after pole maturation is completed. Also contributes to the recruitment of PBP1 to the division complex. Not essential for septum formation. In Geobacillus kaustophilus (strain HTA426), this protein is Cell cycle protein GpsB.